Consider the following 709-residue polypeptide: Acyl-coenzyme A oxidase 4 (709 aa).

Polar residues predominate over residues M1 to Q12. Positions M1–W29 are disordered.

The protein belongs to the acyl-CoA oxidase family. As to quaternary structure, homooctamer. FAD serves as cofactor.

Its subcellular location is the peroxisome. It catalyses the reaction a 2,3-saturated acyl-CoA + O2 = a (2E)-enoyl-CoA + H2O2. It participates in lipid metabolism; peroxisomal fatty acid beta-oxidation. The chain is Acyl-coenzyme A oxidase 4 (POX4) from Candida tropicalis (Yeast).